Here is a 203-residue protein sequence, read N- to C-terminus: Eukaryotic translation initiation factor isoform 4E (203 aa).

A compositionally biased stretch (low complexity) spans 1-25 (MATETAGAVVESSSAATVPSPAPEA). Positions 1–27 (MATETAGAVVESSSAATVPSPAPEAGS) are disordered. MRNA contacts are provided by residues 47–52 (QGAAWG), lysine 79, and 97–98 (WE). Cysteine 102 and cysteine 141 are oxidised to a cystine. Residue 148–153 (RQRQDK) participates in mRNA binding.

It belongs to the eukaryotic initiation factor 4E family. In terms of assembly, EIF4F is a multi-subunit complex, the composition of which varies with external and internal environmental conditions. It is composed of at least EIF4A, EIF4E and EIF4G. EIF4E is also known to interact with other partners. In higher plants two isoforms of EIF4F have been identified, named isoform EIF4F and isoform EIF(iso)4F. Isoform EIF4F has subunits p220 and p26, whereas isoform EIF(iso)4F has subunits p82 and p28. (Microbial infection) Interacts with the potyvirus peanut stripe virus (PStV) helper component proteinase (HC-Pro) in the cytoplasm and with PStV viral genome-linked protein (VPg) in the nucleus; these interactions are possible in susceptible hosts but impaired in resistant plants. According to the redox status, the Cys-102-Cys-141 disulfide bridge may have a role in regulating protein function by affecting its ability to bind capped mRNA. As to expression, expressed ubiquitously with highest levels in young leaves and roots, and lowest levels in flowers.

The protein localises to the cytoplasm. It is found in the nucleus. Its function is as follows. Component of the protein complex eIF4F, which is involved in the recognition of the mRNA cap, ATP-dependent unwinding of 5'-terminal secondary structure and recruitment of mRNA to the ribosome. Recognizes and binds the 7-methylguanosine-containing mRNA cap during an early step in the initiation of protein synthesis and facilitates ribosome binding by inducing the unwinding of the mRNAs secondary structures. Key component of recessive resistance to potyviruses such as peanut stripe virus (PStV). In terms of biological role, (Microbial infection) Susceptibility host factor required for viral infection by recruiting viral RNAs to the host ribosomal complex via an interaction with viral genome-linked protein (VPg). This chain is Eukaryotic translation initiation factor isoform 4E, found in Arachis hypogaea (Peanut).